The sequence spans 97 residues: Large ribosomal subunit protein eL37 (97 aa).

Residue lysine 10 is modified to N6-acetyllysine. 4 residues coordinate Zn(2+): cysteine 19, cysteine 22, cysteine 34, and cysteine 37. A C4-type zinc finger spans residues 19–37; it reads CRRCGSKAYHLQKSTCGKC. Phosphoserine is present on residues serine 96 and serine 97.

The protein belongs to the eukaryotic ribosomal protein eL37 family. Component of the large ribosomal subunit.

The protein resides in the cytoplasm. Functionally, component of the large ribosomal subunit. The ribosome is a large ribonucleoprotein complex responsible for the synthesis of proteins in the cell. The polypeptide is Large ribosomal subunit protein eL37 (RPL37) (Bos taurus (Bovine)).